We begin with the raw amino-acid sequence, 371 residues long: 4-hydroxyprotoasukamycin monooxygenase (371 aa).

Belongs to the bacterial luciferase oxidoreductase family. It depends on FMN as a cofactor.

The catalysed reaction is 4-hydroxyprotoasukamycin + NADH + O2 + H(+) = asukamycin + NAD(+) + H2O. It functions in the pathway antibiotic biosynthesis. Its function is as follows. Involved in the biosynthesis of the antibiotic asukamycin. Catalyzes the epoxidation of 4-hydroxyprotoasukamycin to the final product, asukamycin. Can also convert some 4-hydroxyprotoasukamycin derivatives to their asukamycin derivatives, but cannot use protoasukamycin as substrate. Can also use NADPH, but catalytic efficiency is 20-fold higher with NADH. The polypeptide is 4-hydroxyprotoasukamycin monooxygenase (Streptomyces nodosus subsp. asukaensis).